A 262-amino-acid polypeptide reads, in one-letter code: Acyl-[acyl-carrier-protein]--UDP-N-acetylglucosamine O-acyltransferase (262 aa).

This sequence belongs to the transferase hexapeptide repeat family. LpxA subfamily. Homotrimer.

It localises to the cytoplasm. It carries out the reaction a (3R)-hydroxyacyl-[ACP] + UDP-N-acetyl-alpha-D-glucosamine = a UDP-3-O-[(3R)-3-hydroxyacyl]-N-acetyl-alpha-D-glucosamine + holo-[ACP]. Its pathway is glycolipid biosynthesis; lipid IV(A) biosynthesis; lipid IV(A) from (3R)-3-hydroxytetradecanoyl-[acyl-carrier-protein] and UDP-N-acetyl-alpha-D-glucosamine: step 1/6. In terms of biological role, involved in the biosynthesis of lipid A, a phosphorylated glycolipid that anchors the lipopolysaccharide to the outer membrane of the cell. This is Acyl-[acyl-carrier-protein]--UDP-N-acetylglucosamine O-acyltransferase from Campylobacter curvus (strain 525.92).